The chain runs to 157 residues: SsrA-binding protein (157 aa).

Belongs to the SmpB family.

The protein localises to the cytoplasm. Functionally, required for rescue of stalled ribosomes mediated by trans-translation. Binds to transfer-messenger RNA (tmRNA), required for stable association of tmRNA with ribosomes. tmRNA and SmpB together mimic tRNA shape, replacing the anticodon stem-loop with SmpB. tmRNA is encoded by the ssrA gene; the 2 termini fold to resemble tRNA(Ala) and it encodes a 'tag peptide', a short internal open reading frame. During trans-translation Ala-aminoacylated tmRNA acts like a tRNA, entering the A-site of stalled ribosomes, displacing the stalled mRNA. The ribosome then switches to translate the ORF on the tmRNA; the nascent peptide is terminated with the 'tag peptide' encoded by the tmRNA and targeted for degradation. The ribosome is freed to recommence translation, which seems to be the essential function of trans-translation. This chain is SsrA-binding protein, found in Chromohalobacter salexigens (strain ATCC BAA-138 / DSM 3043 / CIP 106854 / NCIMB 13768 / 1H11).